Here is a 270-residue protein sequence, read N- to C-terminus: Tetraspanin-17 (270 aa).

Over 1–19 (MPGKHQQFQDPEVGCCGKY) the chain is Cytoplasmic. Residues 20-40 (FLFGFNIVFWVLGALFLAIGL) traverse the membrane as a helical segment. At 41 to 63 (WAWGEKGVLSNISALTDLGGLDP) the chain is on the extracellular side. An N-linked (GlcNAc...) asparagine glycan is attached at Asn51. A helical transmembrane segment spans residues 64 to 84 (VWLFVVVGGVMSVLGFAGCIG). Over 85–94 (ALRENTFLLK) the chain is Cytoplasmic. The chain crosses the membrane as a helical span at residues 95–115 (FFSVFLGLIFFLELAAGILAF). At 116–234 (VFKDWIRDQL…GQFEKWLQDN (119 aa)) the chain is on the extracellular side. 4 disulfide bridges follow: Cys155/Cys223, Cys156/Cys188, Cys172/Cys182, and Cys189/Cys202. Residue Asn171 is glycosylated (N-linked (GlcNAc...) asparagine). A helical transmembrane segment spans residues 235–255 (LIVVAGVLVGIALLQIFGLCL). Residues 256-270 (AQNLVSDIKAVKANW) are Cytoplasmic-facing.

It belongs to the tetraspanin (TM4SF) family. Interacts with ADAM10; the interaction influences ADAM10 substrate specificity, endocytosis and turnover.

It is found in the cell membrane. Part of TspanC8 subgroup, composed of 6 members that interact with the transmembrane metalloprotease ADAM10. This interaction is required for ADAM10 exit from the endoplasmic reticulum and for enzymatic maturation and trafficking to the cell surface as well as substrate specificity. Different TspanC8/ADAM10 complexes have distinct substrates. Seems to regulate VE-cadherin expression in endothelial cells probably through interaction with ADAM10, promoting leukocyte transmigration. This chain is Tetraspanin-17 (Tspan17), found in Mus musculus (Mouse).